The chain runs to 370 residues: uncharacterized protein (370 aa).

Residues D152, H154, D184, N215, H306, and H308 each contribute to the a divalent metal cation site.

It belongs to the metallophosphoesterase superfamily. It depends on a divalent metal cation as a cofactor.

This is an uncharacterized protein from Helicobacter pylori (strain ATCC 700392 / 26695) (Campylobacter pylori).